The sequence spans 924 residues: Lipoxygenase 7, chloroplastic (924 aa).

The N-terminal 61 residues, 1–61 (MLRPQLNPSS…GQGSSRVVVV (61 aa)), are a transit peptide targeting the chloroplast. The PLAT domain occupies 88-218 (AVATIKVTVG…VGDEGTPSKR (131 aa)). One can recognise a Lipoxygenase domain in the interval 225–924 (TYLPGQTPAG…GMGIPNSTSI (700 aa)). Positions 231-315 (TPAGLRSYRK…PKSETRKGNV (85 aa)) are disordered. Basic and acidic residues-rich tracts occupy residues 239 to 262 (RKNDLQQKRGDGTGEREADDRVYD) and 302 to 315 (SKKDPKSETRKGNV). Residues His-581, His-586, His-773, Asn-777, and Ile-924 each coordinate Fe cation.

Belongs to the lipoxygenase family. Fe cation is required as a cofactor.

Its subcellular location is the plastid. The protein localises to the chloroplast. The enzyme catalyses (9Z,12Z)-octadecadienoate + O2 = (13S)-hydroperoxy-(9Z,11E)-octadecadienoate. It carries out the reaction (9Z,12Z,15Z)-octadecatrienoate + O2 = (13S)-hydroperoxy-(9Z,11E,15Z)-octadecatrienoate. It participates in lipid metabolism; oxylipin biosynthesis. Plant lipoxygenase may be involved in a number of diverse aspects of plant physiology including growth and development, pest resistance, and senescence or responses to wounding. This lipoxygenase introduces molecular oxygen exclusively into the C-13 position of linoleic and linolenic acids. The polypeptide is Lipoxygenase 7, chloroplastic (CM-LOX1) (Oryza sativa subsp. japonica (Rice)).